A 213-amino-acid polypeptide reads, in one-letter code: MKPYQRQFIEFALGKQVLKFGEFTLKSGRKSPYFFNAGLFNTGRDLALLGRFYAEALVDSGLEFDLLFGPAYKGIPIATTTAVALAEHHDLDLPYCFNRKEAKDHGEGGNLVGSALQGRVMLVDDVITAGTAIRESMEIIQANGATLAGVLISLDRQERGRSEISAIQEVERDYNCKVISIITLKDLIAYLEEKPEMAEHLAAVKAYREEFGV.

A 5-phospho-alpha-D-ribose 1-diphosphate-binding site is contributed by K26. Position 34-35 (F34–F35) interacts with orotate. 5-phospho-alpha-D-ribose 1-diphosphate-binding positions include Y72–K73, R99, K100, K103, H105, and D124–A132. Orotate is bound by residues T128 and R156.

This sequence belongs to the purine/pyrimidine phosphoribosyltransferase family. PyrE subfamily. As to quaternary structure, homodimer. Mg(2+) serves as cofactor.

The enzyme catalyses orotidine 5'-phosphate + diphosphate = orotate + 5-phospho-alpha-D-ribose 1-diphosphate. Its pathway is pyrimidine metabolism; UMP biosynthesis via de novo pathway; UMP from orotate: step 1/2. In terms of biological role, catalyzes the transfer of a ribosyl phosphate group from 5-phosphoribose 1-diphosphate to orotate, leading to the formation of orotidine monophosphate (OMP). This Escherichia coli O139:H28 (strain E24377A / ETEC) protein is Orotate phosphoribosyltransferase.